Consider the following 242-residue polypeptide: Dihydropteridine reductase (242 aa).

12 to 36 (LVYGGRGALGSRCVQAFRARNWWVA) is a binding site for NADP(+). Residues Lys-71, Lys-77, Lys-94, and Lys-100 each carry the N6-succinyllysine modification. The active-site Proton acceptor is Tyr-148.

The protein belongs to the short-chain dehydrogenases/reductases (SDR) family. As to quaternary structure, homodimer.

The enzyme catalyses 5,6,7,8-tetrahydropteridine + NAD(+) = 6,7-dihydropteridine + NADH + H(+). It carries out the reaction 5,6,7,8-tetrahydropteridine + NADP(+) = 6,7-dihydropteridine + NADPH + H(+). Functionally, catalyzes the conversion of quinonoid dihydrobiopterin into tetrahydrobiopterin. The sequence is that of Dihydropteridine reductase (QDPR) from Bos taurus (Bovine).